Here is a 152-residue protein sequence, read N- to C-terminus: Small ribosomal subunit protein uS8m (152 aa).

It belongs to the universal ribosomal protein uS8 family.

The protein resides in the mitochondrion. This is Small ribosomal subunit protein uS8m (mrps8) from Dictyostelium discoideum (Social amoeba).